A 149-amino-acid polypeptide reads, in one-letter code: 3-dehydroquinate dehydratase (149 aa).

The Proton acceptor role is filled by Tyr-26. The substrate site is built by Asn-77, His-83, and Asp-90. The active-site Proton donor is His-103. Residues 104–105 (LS) and Arg-114 contribute to the substrate site.

It belongs to the type-II 3-dehydroquinase family. As to quaternary structure, homododecamer.

It catalyses the reaction 3-dehydroquinate = 3-dehydroshikimate + H2O. It participates in metabolic intermediate biosynthesis; chorismate biosynthesis; chorismate from D-erythrose 4-phosphate and phosphoenolpyruvate: step 3/7. In terms of biological role, catalyzes a trans-dehydration via an enolate intermediate. The sequence is that of 3-dehydroquinate dehydratase from Vibrio vulnificus (strain YJ016).